Here is a 133-residue protein sequence, read N- to C-terminus: Small ribosomal subunit protein uS8 (133 aa).

It belongs to the universal ribosomal protein uS8 family. Part of the 30S ribosomal subunit. Contacts proteins S5 and S12.

In terms of biological role, one of the primary rRNA binding proteins, it binds directly to 16S rRNA central domain where it helps coordinate assembly of the platform of the 30S subunit. This chain is Small ribosomal subunit protein uS8, found in Synechococcus sp. (strain CC9605).